The primary structure comprises 422 residues: Probable isoprenylcysteine alpha-carbonyl methylesterase ICMEL2 (422 aa).

Residues 1 to 16 (MQLSPERCRPMSENRE) are compositionally biased toward basic and acidic residues. The interval 1–55 (MQLSPERCRPMSENREAWSANSEEMELLHGSNRLSSPEHVRRRVSGNSSEDGSPR) is disordered. Transmembrane regions (helical) follow at residues 97 to 117 (LLAL…VAYL) and 152 to 172 (VVVF…GSLL). Substrate is bound by residues 158–160 (GGA) and 229–231 (QSA). Residues S230, D331, and H363 contribute to the active site.

This sequence belongs to the AB hydrolase superfamily. Isoprenylcysteine methylesterase family. Expressed at low levels in flowers and siliques.

Its subcellular location is the endoplasmic reticulum membrane. It localises to the golgi apparatus membrane. It carries out the reaction [protein]-C-terminal S-[(2E,6E)-farnesyl]-L-cysteine methyl ester + H2O = [protein]-C-terminal S-[(2E,6E)-farnesyl]-L-cysteine + methanol + H(+). Functionally, catalyzes the demethylation of isoprenylcysteine methylesters. May act as a negative regulator of ABA signaling. The polypeptide is Probable isoprenylcysteine alpha-carbonyl methylesterase ICMEL2 (Arabidopsis thaliana (Mouse-ear cress)).